A 600-amino-acid chain; its full sequence is Elongation factor 4 (600 aa).

One can recognise a tr-type G domain in the interval 5 to 187; sequence KYIRNFSIIA…AIVNKLPPPK (183 aa). Residues 17–22 and 134–137 each bind GTP; these read DHGKST and NKLD.

This sequence belongs to the TRAFAC class translation factor GTPase superfamily. Classic translation factor GTPase family. LepA subfamily.

The protein resides in the cell inner membrane. The enzyme catalyses GTP + H2O = GDP + phosphate + H(+). Required for accurate and efficient protein synthesis under certain stress conditions. May act as a fidelity factor of the translation reaction, by catalyzing a one-codon backward translocation of tRNAs on improperly translocated ribosomes. Back-translocation proceeds from a post-translocation (POST) complex to a pre-translocation (PRE) complex, thus giving elongation factor G a second chance to translocate the tRNAs correctly. Binds to ribosomes in a GTP-dependent manner. The sequence is that of Elongation factor 4 from Rickettsia africae (strain ESF-5).